Reading from the N-terminus, the 162-residue chain is Nucleotide-binding protein ABSDF0503 (162 aa).

It belongs to the YajQ family.

Functionally, nucleotide-binding protein. This is Nucleotide-binding protein ABSDF0503 from Acinetobacter baumannii (strain SDF).